The sequence spans 532 residues: Cocaine esterase (532 aa).

Residue glutamine 1 is modified to Pyrrolidone carboxylic acid. Residues cysteine 69 and cysteine 96 are joined by a disulfide bond. The active-site Acyl-ester intermediate is serine 201. The N-linked (GlcNAc...) asparagine glycan is linked to asparagine 249. A disulfide bridge links cysteine 253 with cysteine 264. Active-site charge relay system residues include glutamate 318 and histidine 430. The Prevents secretion from ER motif lies at histidine 529–leucine 532.

This sequence belongs to the type-B carboxylesterase/lipase family. In terms of assembly, monomer.

It localises to the endoplasmic reticulum lumen. The catalysed reaction is a carboxylic ester + H2O = an alcohol + a carboxylate + H(+). It catalyses the reaction cocaine + H2O = ecgonine methyl ester + benzoate + H(+). It carries out the reaction 2-(5Z,8Z,11Z,14Z-eicosatetraenoyl)-glycerol + H2O = glycerol + (5Z,8Z,11Z,14Z)-eicosatetraenoate + H(+). The enzyme catalyses prostaglandin E2 1-glyceryl ester + H2O = prostaglandin E2 + glycerol + H(+). The catalysed reaction is prostaglandin F2alpha 1-glyceryl ester + H2O = prostaglandin F2alpha + glycerol + H(+). Its function is as follows. Involved in the detoxification of xenobiotics and in the activation of ester and amide prodrugs. Converts monoacylglycerides to free fatty acids and glycerol. Hydrolyzes of 2-arachidonoylglycerol and prostaglandins. The polypeptide is Cocaine esterase (CES2) (Oryctolagus cuniculus (Rabbit)).